A 183-amino-acid chain; its full sequence is Ribosome rescue factor SmrB (183 aa).

One can recognise a Smr domain in the interval 98 to 173 (LDLHGLTQQQ…GDAALLVLIE (76 aa)).

It belongs to the SmrB family. Associates with collided ribosomes, but not with correctly translating polysomes.

Its function is as follows. Acts as a ribosome collision sensor. Detects stalled/collided disomes (pairs of ribosomes where the leading ribosome is stalled and a second ribosome has collided with it) and endonucleolytically cleaves mRNA at the 5' boundary of the stalled ribosome. Stalled/collided disomes form a new interface (primarily via the 30S subunits) that binds SmrB. Cleaved mRNA becomes available for tmRNA ligation, leading to ribosomal subunit dissociation and rescue of stalled ribosomes. The sequence is that of Ribosome rescue factor SmrB from Klebsiella pneumoniae (strain 342).